The sequence spans 514 residues: ATP synthase subunit alpha (514 aa).

Residue 170-177 (GDRQIGKT) coordinates ATP.

The protein belongs to the ATPase alpha/beta chains family. F-type ATPases have 2 components, CF(1) - the catalytic core - and CF(0) - the membrane proton channel. CF(1) has five subunits: alpha(3), beta(3), gamma(1), delta(1), epsilon(1). CF(0) has three main subunits: a(1), b(2) and c(9-12). The alpha and beta chains form an alternating ring which encloses part of the gamma chain. CF(1) is attached to CF(0) by a central stalk formed by the gamma and epsilon chains, while a peripheral stalk is formed by the delta and b chains.

Its subcellular location is the cell inner membrane. It catalyses the reaction ATP + H2O + 4 H(+)(in) = ADP + phosphate + 5 H(+)(out). In terms of biological role, produces ATP from ADP in the presence of a proton gradient across the membrane. The alpha chain is a regulatory subunit. The protein is ATP synthase subunit alpha of Stutzerimonas stutzeri (strain A1501) (Pseudomonas stutzeri).